The primary structure comprises 180 residues: Large ribosomal subunit protein uL5 (180 aa).

It belongs to the universal ribosomal protein uL5 family. As to quaternary structure, part of the 50S ribosomal subunit; part of the 5S rRNA/L5/L18/L25 subcomplex. Contacts the 5S rRNA and the P site tRNA. Forms a bridge to the 30S subunit in the 70S ribosome.

Functionally, this is one of the proteins that bind and probably mediate the attachment of the 5S RNA into the large ribosomal subunit, where it forms part of the central protuberance. In the 70S ribosome it contacts protein S13 of the 30S subunit (bridge B1b), connecting the 2 subunits; this bridge is implicated in subunit movement. Contacts the P site tRNA; the 5S rRNA and some of its associated proteins might help stabilize positioning of ribosome-bound tRNAs. The chain is Large ribosomal subunit protein uL5 from Xanthomonas axonopodis pv. citri (strain 306).